The chain runs to 985 residues: Ephrin type-A receptor 4-B (985 aa).

An N-terminal signal peptide occupies residues 1 to 20; the sequence is MAGIVHGILFCGLFGLCWAV. The Extracellular portion of the chain corresponds to 21 to 547; it reads TGSRIYPASE…MIGEGTSPTV (527 aa). Residues 30–209 form the Eph LBD domain; that stretch reads EVTLLDSRSV…FYKKCPLTVR (180 aa). 2 consecutive Fibronectin type-III domains span residues 328-438 and 439-536; these read PPSA…TNQA and APST…TVPS. N-linked (GlcNAc...) asparagine glycans are attached at residues asparagine 340 and asparagine 407. The helical transmembrane segment at 548–569 threads the bilayer; that stretch reads LLVSVAGSIVLVVILIAAFVIS. The Cytoplasmic portion of the chain corresponds to 570–985; it reads RRRSKYSKAK…QQMQGRMVPV (416 aa). Residues tyrosine 595 and tyrosine 601 each carry the phosphotyrosine; by autocatalysis modification. Positions 620-881 constitute a Protein kinase domain; sequence IKIEKVIGVG…QIVSMLDKLI (262 aa). Residues 626 to 634 and lysine 652 each bind ATP; that span reads IGVGEFGEV. The active-site Proton acceptor is the aspartate 745. Residues tyrosine 778 and tyrosine 927 each carry the phosphotyrosine; by autocatalysis modification. Residues 910-974 enclose the SAM domain; that stretch reads SQVASVLDWL…LSSVQGMRTQ (65 aa). The PDZ-binding motif lies at 983–985; sequence VPV.

This sequence belongs to the protein kinase superfamily. Tyr protein kinase family. Ephrin receptor subfamily. In terms of tissue distribution, localized expression in a subset of neural crest and neural tissues in embryos.

The protein localises to the cell membrane. It localises to the early endosome. It catalyses the reaction L-tyrosyl-[protein] + ATP = O-phospho-L-tyrosyl-[protein] + ADP + H(+). Its function is as follows. Receptor tyrosine kinase which binds membrane-bound ephrin family ligands residing on adjacent cells, leading to contact-dependent bidirectional signaling into neighboring cells. The signaling pathway downstream of the receptor is referred to as forward signaling while the signaling pathway downstream of the ephrin ligand is referred to as reverse signaling. Highly promiscuous, it has the unique property among Eph receptors to bind and to be physiologically activated by both GPI-anchored ephrin-A and transmembrane ephrin-B ligands including EFNA1 and EFNB3. Upon activation by ephrin ligands, modulates cell morphology and integrin-dependent cell adhesion through regulation of the Rac, Rap and Rho GTPases activity. Plays an important role in the development of the nervous system controlling different steps of axonal guidance including the establishment of the corticospinal projections. The protein is Ephrin type-A receptor 4-B (epha4-b) of Xenopus laevis (African clawed frog).